The sequence spans 434 residues: Methylenetetrahydrofolate--tRNA-(uracil-5-)-methyltransferase TrmFO (434 aa).

10–15 (GAGLAG) contributes to the FAD binding site.

This sequence belongs to the MnmG family. TrmFO subfamily. Requires FAD as cofactor.

It localises to the cytoplasm. It catalyses the reaction uridine(54) in tRNA + (6R)-5,10-methylene-5,6,7,8-tetrahydrofolate + NADH + H(+) = 5-methyluridine(54) in tRNA + (6S)-5,6,7,8-tetrahydrofolate + NAD(+). The catalysed reaction is uridine(54) in tRNA + (6R)-5,10-methylene-5,6,7,8-tetrahydrofolate + NADPH + H(+) = 5-methyluridine(54) in tRNA + (6S)-5,6,7,8-tetrahydrofolate + NADP(+). Functionally, catalyzes the folate-dependent formation of 5-methyl-uridine at position 54 (M-5-U54) in all tRNAs. The sequence is that of Methylenetetrahydrofolate--tRNA-(uracil-5-)-methyltransferase TrmFO from Bacillus cereus (strain Q1).